A 329-amino-acid polypeptide reads, in one-letter code: T-cell acute lymphocytic leukemia protein 1 homolog (329 aa).

Disordered regions lie at residues methionine 1–proline 28, glutamate 40–aspartate 78, and threonine 91–alanine 125. Position 12 is a phosphoserine (serine 12). Residues serine 58–alanine 70 are compositionally biased toward gly residues. The segment covering proline 96 to alanine 106 has biased composition (pro residues). Serine 122 is modified (phosphoserine; by MAPK). Serine 172 bears the Phosphoserine mark. One can recognise a bHLH domain in the interval valine 187–leucine 239. The tract at residues glutamate 247–arginine 329 is disordered. Residues glycine 263–isoleucine 273 show a composition bias toward gly residues. Over residues proline 317 to arginine 329 the composition is skewed to low complexity.

In terms of assembly, efficient DNA binding requires dimerization with another bHLH protein. Forms heterodimers with TCF3. Binds to the LIM domain containing protein LMO2 and to DRG1. Can assemble in a complex with LDB1 and LMO2. Component of a TAL-1 complex composed at least of CBFA2T3, LDB1, TAL1 and TCF3. Interacts with SBNO2; this interaction inhibits TAL1 occupancy of the DCSTAMP promoter, leading to the activation of the DCSTAMP promoter by the transcription factor MITF. Post-translationally, phosphorylated on serine residues. Phosphorylation of Ser-122 by MAPK is strongly stimulated by hypoxia. Ubiquitinated; subsequent to hypoxia-dependent phosphorylation of Ser-122, ubiquitination targets the protein for rapid degradation via the ubiquitin system. This process may be characteristic for microvascular endothelial cells, since it could not be observed in large vessel endothelial cells. As to expression, erythroid and myeloid cells.

The protein resides in the nucleus. Its function is as follows. Implicated in the genesis of hemopoietic malignancies. It may play an important role in hemopoietic differentiation. Serves as a positive regulator of erythroid differentiation. This is T-cell acute lymphocytic leukemia protein 1 homolog (Tal1) from Mus musculus (Mouse).